The sequence spans 459 residues: Mitochondrial distribution and morphology protein 34 (459 aa).

The 190-residue stretch at 1–190 (MSFRFNEAVF…LPSLIFNTSQ (190 aa)) folds into the SMP-LTD domain. Over residues 338 to 347 (RSNSNDDNAK) the composition is skewed to basic and acidic residues. The disordered stretch occupies residues 338–375 (RSNSNDDNAKPRRRKIKCKKTRTPSNLQSQGEQAVDDS). Positions 348-359 (PRRRKIKCKKTR) are enriched in basic residues.

Belongs to the MDM34 family. As to quaternary structure, component of the ER-mitochondria encounter structure (ERMES) or MDM complex, composed of MMM1, MDM10, MDM12 and MDM34. In terms of processing, ubiquitinated by a SCF (SKP1-CUL1-F-box protein) E3 ubiquitin-protein ligase complex containing the F-box protein MDM30. Ubiquitination is important for mitochondrial integrity.

The protein resides in the mitochondrion outer membrane. Its function is as follows. Component of the ERMES/MDM complex, which serves as a molecular tether to connect the endoplasmic reticulum (ER) and mitochondria. Components of this complex are involved in the control of mitochondrial shape and protein biogenesis, and function in nonvesicular lipid trafficking between the ER and mitochondria. MDM34 is required for the interaction of the ER-resident membrane protein MMM1 and the outer mitochondrial membrane-resident beta-barrel protein MDM10. This chain is Mitochondrial distribution and morphology protein 34, found in Saccharomyces cerevisiae (strain AWRI1631) (Baker's yeast).